A 190-amino-acid polypeptide reads, in one-letter code: MALHLSLSHQSWTSPAHPITSSDPTRSSVPGTGLSRRVDFLGSCKINGVFVVKRKDRRRMRGGEVRASMEQALGTQEMEAIVGKVTEVNKDTFWPIVKAAGDKPVVLDMFTQWCGPCKAMAPKYEKLAEEYLDVIFLKLDCNQENKTLAKELGIRVVPTFKILKENSVVGEVTGAKYDKLLEAIQAARSS.

Residues 1 to 31 form a disordered region; sequence MALHLSLSHQSWTSPAHPITSSDPTRSSVPG. The N-terminal 77 residues, 1–77, are a transit peptide targeting the chloroplast; that stretch reads MALHLSLSHQ…SMEQALGTQE (77 aa). Residues 7–30 are compositionally biased toward polar residues; that stretch reads LSHQSWTSPAHPITSSDPTRSSVP. A Thioredoxin domain is found at 78-189; that stretch reads MEAIVGKVTE…LLEAIQAARS (112 aa). Active-site nucleophile residues include C114 and C117. A disulfide bridge links C114 with C117.

Belongs to the thioredoxin family. Plant F-type subfamily. Forms a complex with heterodimeric ferredoxin-thioredoxin reductase (FTR) and ferredoxin.

Its subcellular location is the plastid. It localises to the chloroplast. Functionally, participates in various redox reactions through the reversible oxidation of the active center dithiol to a disulfide. The F form is known to activate a number of enzymes of the photosynthetic carbon cycle. In Spinacia oleracea (Spinach), this protein is Thioredoxin F-type, chloroplastic.